Here is a 432-residue protein sequence, read N- to C-terminus: Adenylosuccinate synthetase (432 aa).

GTP-binding positions include 13–19 and 41–43; these read GDEGKGK and GHT. Catalysis depends on Asp-14, which acts as the Proton acceptor. Residues Asp-14 and Gly-41 each coordinate Mg(2+). IMP is bound by residues 14–17, 39–42, Thr-130, Arg-144, Gln-225, Thr-240, and Arg-304; these read DEGK and NAGH. The active-site Proton donor is the His-42. Residue 300–306 coordinates substrate; it reads ATTGRRR. GTP is bound by residues Arg-306, 332-334, and 415-417; these read KLD and STG.

Belongs to the adenylosuccinate synthetase family. In terms of assembly, homodimer. It depends on Mg(2+) as a cofactor.

It is found in the cytoplasm. The enzyme catalyses IMP + L-aspartate + GTP = N(6)-(1,2-dicarboxyethyl)-AMP + GDP + phosphate + 2 H(+). It participates in purine metabolism; AMP biosynthesis via de novo pathway; AMP from IMP: step 1/2. Functionally, plays an important role in the de novo pathway of purine nucleotide biosynthesis. Catalyzes the first committed step in the biosynthesis of AMP from IMP. The chain is Adenylosuccinate synthetase from Klebsiella pneumoniae subsp. pneumoniae (strain ATCC 700721 / MGH 78578).